Reading from the N-terminus, the 365-residue chain is 2-aminoethylphosphonate--pyruvate transaminase (365 aa).

Lys-194 is modified (N6-(pyridoxal phosphate)lysine).

This sequence belongs to the class-V pyridoxal-phosphate-dependent aminotransferase family. PhnW subfamily. In terms of assembly, homodimer. The cofactor is pyridoxal 5'-phosphate.

The catalysed reaction is (2-aminoethyl)phosphonate + pyruvate = phosphonoacetaldehyde + L-alanine. Involved in phosphonate degradation. This Bacillus cereus (strain Q1) protein is 2-aminoethylphosphonate--pyruvate transaminase.